We begin with the raw amino-acid sequence, 55 residues long: MAKKSREKIKMISSAGTGHYYTTTKNKRNTPDKLKLKKYDPVIRKHILYNEGKIK.

The protein belongs to the bacterial ribosomal protein bL33 family.

The protein is Large ribosomal subunit protein bL33 (rpmG) of Buchnera aphidicola subsp. Acyrthosiphon pisum (strain APS) (Acyrthosiphon pisum symbiotic bacterium).